The sequence spans 228 residues: Cytidylate kinase (228 aa).

Residue 12–20 participates in ATP binding; sequence GPSGSGKGT.

It belongs to the cytidylate kinase family. Type 1 subfamily.

Its subcellular location is the cytoplasm. The enzyme catalyses CMP + ATP = CDP + ADP. It carries out the reaction dCMP + ATP = dCDP + ADP. This chain is Cytidylate kinase, found in Pseudomonas putida (strain ATCC 47054 / DSM 6125 / CFBP 8728 / NCIMB 11950 / KT2440).